Consider the following 499-residue polypeptide: Bifunctional purine biosynthesis protein PurH (499 aa).

In terms of domain architecture, MGS-like spans 1-144 (MIKRALISVF…KNFKDVVVLT (144 aa)).

The protein belongs to the PurH family.

It catalyses the reaction (6R)-10-formyltetrahydrofolate + 5-amino-1-(5-phospho-beta-D-ribosyl)imidazole-4-carboxamide = 5-formamido-1-(5-phospho-D-ribosyl)imidazole-4-carboxamide + (6S)-5,6,7,8-tetrahydrofolate. It carries out the reaction IMP + H2O = 5-formamido-1-(5-phospho-D-ribosyl)imidazole-4-carboxamide. It participates in purine metabolism; IMP biosynthesis via de novo pathway; 5-formamido-1-(5-phospho-D-ribosyl)imidazole-4-carboxamide from 5-amino-1-(5-phospho-D-ribosyl)imidazole-4-carboxamide (10-formyl THF route): step 1/1. The protein operates within purine metabolism; IMP biosynthesis via de novo pathway; IMP from 5-formamido-1-(5-phospho-D-ribosyl)imidazole-4-carboxamide: step 1/1. This Clostridium botulinum (strain Kyoto / Type A2) protein is Bifunctional purine biosynthesis protein PurH.